We begin with the raw amino-acid sequence, 415 residues long: Multidrug resistance protein MdtA (415 aa).

Positions 1–21 (MKGSYKSRWVIVIVVVIAAIA) are cleaved as a signal peptide. Disordered regions lie at residues 32-60 (SRSA…GPLA) and 392-415 (EAQS…GARS). Residues 399 to 415 (PEEKATSREYAKKGARS) show a composition bias toward basic and acidic residues.

It belongs to the membrane fusion protein (MFP) (TC 8.A.1) family. As to quaternary structure, part of a tripartite efflux system composed of MdtA, MdtB and MdtC.

The protein resides in the cell inner membrane. In terms of biological role, the MdtABC tripartite complex confers resistance against novobiocin and deoxycholate. The sequence is that of Multidrug resistance protein MdtA from Escherichia coli (strain K12 / MC4100 / BW2952).